The sequence spans 364 residues: Histidinol-phosphate aminotransferase (364 aa).

The residue at position 225 (Lys225) is an N6-(pyridoxal phosphate)lysine.

It belongs to the class-II pyridoxal-phosphate-dependent aminotransferase family. Histidinol-phosphate aminotransferase subfamily. As to quaternary structure, homodimer. Pyridoxal 5'-phosphate serves as cofactor.

It carries out the reaction L-histidinol phosphate + 2-oxoglutarate = 3-(imidazol-4-yl)-2-oxopropyl phosphate + L-glutamate. The protein operates within amino-acid biosynthesis; L-histidine biosynthesis; L-histidine from 5-phospho-alpha-D-ribose 1-diphosphate: step 7/9. The chain is Histidinol-phosphate aminotransferase from Sulfurovum sp. (strain NBC37-1).